The following is a 339-amino-acid chain: Outer membrane protein assembly factor BamC (339 aa).

Residues Met1 to Ala19 form the signal peptide. The N-palmitoyl cysteine moiety is linked to residue Cys20. A lipid anchor (S-diacylglycerol cysteine) is attached at Cys20.

The protein belongs to the BamC family. As to quaternary structure, part of the Bam complex.

It localises to the cell outer membrane. Part of the outer membrane protein assembly complex, which is involved in assembly and insertion of beta-barrel proteins into the outer membrane. This Vibrio cholerae serotype O1 (strain ATCC 39315 / El Tor Inaba N16961) protein is Outer membrane protein assembly factor BamC.